A 149-amino-acid polypeptide reads, in one-letter code: Small ribosomal subunit protein uS19w (149 aa).

The protein belongs to the universal ribosomal protein uS19 family.

It is found in the cytoplasm. The sequence is that of Small ribosomal subunit protein uS19w (RPS15E) from Arabidopsis thaliana (Mouse-ear cress).